Reading from the N-terminus, the 580-residue chain is Phosphomethylpyrimidine synthase (580 aa).

A disordered region spans residues 1-58 (MTPTQNEIHPKHSYSPIRKHGLEVPETEIALDDSPSGPNEPFRIYRTRGPETDPTLGL). Substrate contacts are provided by residues asparagine 180, methionine 209, tyrosine 238, histidine 274, 294 to 296 (SRG), 335 to 338 (DGLR), and glutamate 374. Residue histidine 378 participates in Zn(2+) binding. Tyrosine 401 provides a ligand contact to substrate. Zn(2+) is bound at residue histidine 442. Residues cysteine 522, cysteine 525, and cysteine 530 each contribute to the [4Fe-4S] cluster site. Positions 554–580 (VGASDSTEGMKEKSREFVAGGGEVYRE) are disordered.

The protein belongs to the ThiC family. The cofactor is [4Fe-4S] cluster.

It catalyses the reaction 5-amino-1-(5-phospho-beta-D-ribosyl)imidazole + S-adenosyl-L-methionine = 4-amino-2-methyl-5-(phosphooxymethyl)pyrimidine + CO + 5'-deoxyadenosine + formate + L-methionine + 3 H(+). The protein operates within cofactor biosynthesis; thiamine diphosphate biosynthesis. Its function is as follows. Catalyzes the synthesis of the hydroxymethylpyrimidine phosphate (HMP-P) moiety of thiamine from aminoimidazole ribotide (AIR) in a radical S-adenosyl-L-methionine (SAM)-dependent reaction. The polypeptide is Phosphomethylpyrimidine synthase (Corynebacterium efficiens (strain DSM 44549 / YS-314 / AJ 12310 / JCM 11189 / NBRC 100395)).